The chain runs to 292 residues: Ribosomal protein L11 methyltransferase (292 aa).

The S-adenosyl-L-methionine site is built by threonine 144, glycine 165, aspartate 187, and asparagine 229.

This sequence belongs to the methyltransferase superfamily. PrmA family.

Its subcellular location is the cytoplasm. The enzyme catalyses L-lysyl-[protein] + 3 S-adenosyl-L-methionine = N(6),N(6),N(6)-trimethyl-L-lysyl-[protein] + 3 S-adenosyl-L-homocysteine + 3 H(+). Methylates ribosomal protein L11. This Pseudomonas fluorescens (strain Pf0-1) protein is Ribosomal protein L11 methyltransferase.